We begin with the raw amino-acid sequence, 116 residues long: MASMVMNVLCVAVACMVFSASYADAISCGQVTSGLVPCFGYLAAGGPVPPACCNGVRGLNNAAKTTPDRQTACGCLKGILAANTRINLNNANSLPGKCGISIGYKITPNIDCSKIH.

The N-terminal stretch at methionine 1–alanine 25 is a signal peptide. 4 disulfides stabilise this stretch: cysteine 28-cysteine 75, cysteine 38-cysteine 52, cysteine 53-cysteine 98, and cysteine 73-cysteine 112.

It belongs to the plant LTP family.

Its function is as follows. Plant non-specific lipid-transfer proteins transfer phospholipids as well as galactolipids across membranes. May play a role in wax or cutin deposition in the cell walls of expanding epidermal cells and certain secretory tissues. The polypeptide is Non-specific lipid-transfer protein (Gerbera hybrida (Daisy)).